A 135-amino-acid chain; its full sequence is uncharacterized protein (135 aa).

Positions 13 to 129 constitute a Response regulatory domain; that stretch reads QVLIAENSRF…KILEKVNAAI (117 aa). D64 bears the 4-aspartylphosphate mark.

This is an uncharacterized protein from Leptospira interrogans serogroup Icterohaemorrhagiae serovar copenhageni (strain Fiocruz L1-130).